We begin with the raw amino-acid sequence, 413 residues long: Serine hydroxymethyltransferase (413 aa).

(6S)-5,6,7,8-tetrahydrofolate-binding positions include L119 and 123 to 125 (GHL). The residue at position 228 (K228) is an N6-(pyridoxal phosphate)lysine. Residue 351–353 (SPF) participates in (6S)-5,6,7,8-tetrahydrofolate binding.

This sequence belongs to the SHMT family. In terms of assembly, homodimer. Pyridoxal 5'-phosphate is required as a cofactor.

Its subcellular location is the cytoplasm. It carries out the reaction (6R)-5,10-methylene-5,6,7,8-tetrahydrofolate + glycine + H2O = (6S)-5,6,7,8-tetrahydrofolate + L-serine. It participates in one-carbon metabolism; tetrahydrofolate interconversion. The protein operates within amino-acid biosynthesis; glycine biosynthesis; glycine from L-serine: step 1/1. In terms of biological role, catalyzes the reversible interconversion of serine and glycine with tetrahydrofolate (THF) serving as the one-carbon carrier. This reaction serves as the major source of one-carbon groups required for the biosynthesis of purines, thymidylate, methionine, and other important biomolecules. Also exhibits THF-independent aldolase activity toward beta-hydroxyamino acids, producing glycine and aldehydes, via a retro-aldol mechanism. The sequence is that of Serine hydroxymethyltransferase from Lysinibacillus sphaericus (strain C3-41).